Consider the following 346-residue polypeptide: DNA-directed RNA polymerase subunit alpha (346 aa).

The alpha N-terminal domain (alpha-NTD) stretch occupies residues 1–242; that stretch reads MLIQDGDKLI…DQLSVFINFD (242 aa). The segment at 258–346 is alpha C-terminal domain (alpha-CTD); that stretch reads LNPNLFKSID…WLKRKEKNEA (89 aa).

The protein belongs to the RNA polymerase alpha chain family. As to quaternary structure, homodimer. The RNAP catalytic core consists of 2 alpha, 1 beta, 1 beta' and 1 omega subunit. When a sigma factor is associated with the core the holoenzyme is formed, which can initiate transcription.

It catalyses the reaction RNA(n) + a ribonucleoside 5'-triphosphate = RNA(n+1) + diphosphate. Functionally, DNA-dependent RNA polymerase catalyzes the transcription of DNA into RNA using the four ribonucleoside triphosphates as substrates. The protein is DNA-directed RNA polymerase subunit alpha of Maridesulfovibrio salexigens (strain ATCC 14822 / DSM 2638 / NCIMB 8403 / VKM B-1763) (Desulfovibrio salexigens).